Consider the following 135-residue polypeptide: Small ribosomal subunit protein uS9 (135 aa).

This sequence belongs to the universal ribosomal protein uS9 family.

This chain is Small ribosomal subunit protein uS9, found in Petrotoga mobilis (strain DSM 10674 / SJ95).